Consider the following 219-residue polypeptide: Thiamine-phosphate synthase (219 aa).

Residues 44–48 and Asn-79 each bind 4-amino-2-methyl-5-(diphosphooxymethyl)pyrimidine; that span reads QFREK. 2 residues coordinate Mg(2+): Asp-80 and Asp-99. Ser-117 is a 4-amino-2-methyl-5-(diphosphooxymethyl)pyrimidine binding site. 143-145 lines the 2-[(2R,5Z)-2-carboxy-4-methylthiazol-5(2H)-ylidene]ethyl phosphate pocket; the sequence is TST. Lys-146 contributes to the 4-amino-2-methyl-5-(diphosphooxymethyl)pyrimidine binding site. Residues Gly-175 and 195-196 each bind 2-[(2R,5Z)-2-carboxy-4-methylthiazol-5(2H)-ylidene]ethyl phosphate; that span reads IS.

Belongs to the thiamine-phosphate synthase family. Requires Mg(2+) as cofactor.

It carries out the reaction 2-[(2R,5Z)-2-carboxy-4-methylthiazol-5(2H)-ylidene]ethyl phosphate + 4-amino-2-methyl-5-(diphosphooxymethyl)pyrimidine + 2 H(+) = thiamine phosphate + CO2 + diphosphate. It catalyses the reaction 2-(2-carboxy-4-methylthiazol-5-yl)ethyl phosphate + 4-amino-2-methyl-5-(diphosphooxymethyl)pyrimidine + 2 H(+) = thiamine phosphate + CO2 + diphosphate. The catalysed reaction is 4-methyl-5-(2-phosphooxyethyl)-thiazole + 4-amino-2-methyl-5-(diphosphooxymethyl)pyrimidine + H(+) = thiamine phosphate + diphosphate. Its pathway is cofactor biosynthesis; thiamine diphosphate biosynthesis; thiamine phosphate from 4-amino-2-methyl-5-diphosphomethylpyrimidine and 4-methyl-5-(2-phosphoethyl)-thiazole: step 1/1. In terms of biological role, condenses 4-methyl-5-(beta-hydroxyethyl)thiazole monophosphate (THZ-P) and 2-methyl-4-amino-5-hydroxymethyl pyrimidine pyrophosphate (HMP-PP) to form thiamine monophosphate (TMP). The chain is Thiamine-phosphate synthase from Bacillus cereus (strain ZK / E33L).